A 411-amino-acid polypeptide reads, in one-letter code: Arginine deiminase (411 aa).

The active-site Amidino-cysteine intermediate is the cysteine 401.

This sequence belongs to the arginine deiminase family.

The protein resides in the cytoplasm. The enzyme catalyses L-arginine + H2O = L-citrulline + NH4(+). It participates in amino-acid degradation; L-arginine degradation via ADI pathway; carbamoyl phosphate from L-arginine: step 1/2. The polypeptide is Arginine deiminase (Streptococcus pyogenes serotype M49 (strain NZ131)).